We begin with the raw amino-acid sequence, 194 residues long: Calcium channel flower (194 aa).

Transmembrane regions (helical) follow at residues 35 to 55, 66 to 88, and 113 to 133; these read LGIVAAFFAILFGLWNVFSII, IIQMVAGFVVMLLEAPCCFVCFE, and AIPPIILCFGLASLFGSGLIF.

This sequence belongs to the calcium channel flower family. In terms of assembly, homomultimer. Associates with the dally/ magu complex.

Its subcellular location is the cytoplasmic vesicle. The protein localises to the secretory vesicle. It is found in the synaptic vesicle membrane. The protein resides in the presynaptic cell membrane. It localises to the endosome. With respect to regulation, channel activity is inhibited by La(3+), which reduces Ca(2+) influx and thus inhibits it's function in promoting activity-dependent bulk endocytosis (ADBE) in response to high stimuli. Transmembrane protein which mediates synaptic endocytosis, fitness-based cell culling, neuronal culling, morphogen gradient scaling, and calcium transport. Regulates synaptic endocytosis and hence couples exo- with endocytosis. Controls two major modes of synaptic vesicle (SV) endocytosis in the synaptic boutons of neuromuscular junctions (NMJs); Ca(2+) channel-independent Clathrin-mediated endocytosis (CME) in response to mild stimulation, and Ca(2+) channel-dependent activity-dependent bulk endocytosis (ADBE) in response to strong stimulation. Functions in ADBE and subsequent SV reformation from bulk endosomes by initiating Ca(2+) channel-dependent phosphatidylinositol 4,5-bisphosphate (PtdIns(4,5)P2) compartmentalization in synaptic boutons. There it acts at the periactive zone to provide the low Ca(2+) levels required to initiate Calcineurin activation and upregulate PtdIns(4,5)P2. Conversely PtdIns(4,5)P2 enhances fwe Ca(2+) channel-activity, establishing a positive feedback loop that induces PtdIns(4,5)P2 microdomain at the periactive zone. These microdomains trigger bulk membrane invagination (i.e. ADBE) by triggering actin polymerization while also promoting localization of fwe to bulk endosomes, thereby removing the ADBE trigger to reduce endocytosis and prevent excess membrane uptake. PtdIns(4,5)P2 then promotes SV reformation from the bulk endosomes, to coordinate ADBE and subsequent SV reformation. Different combinations of the flower isoforms at the cell membrane are also required for the identification and elimination of suboptimal or supernumerary cells during development, regeneration, and adulthood. Required for the recognition and elimination of unfit cells in the developing wing during cell competition. In the developing pupal retina, mediates the elimination of unwanted postmitotic neurons, including supernumerary photoreceptor neurons that form at the periphery of the retina and are contained within incomplete ommatidia units. Also required for efficient elimination and replacement of old neurons by newly generated neurons during regeneration in the adult brain following mechanical injury. Downstream of the flower fitness fingerprints, cells identified as unwanted or unfit are eliminated via apoptosis through the expression of ahuizotl (azot). However, the cells marked for elimination by the flower isoforms only undergo apoptosis if additional thresholds are met; (1) their neighboring fit/healthy cells express different levels of the fwe isoforms, and (2) the levels of the protective signal SPARC expressed by the loser or unwanted cells are unable to inhibit caspase activation. These additional thresholds for flower-mediated apoptosis, allows useful cells to recover from transient and limited stress before they are unnecessarily eliminated. Functions with dally and magu in a mechanism of scaling, which utilises apoptosis to ensure that the dpp morphogen gradient, which mediates organ growth, remains proportional to the size of the growing wing. In this mechanism, fwe represses dally- and Magu-dependent activity in expanding the gradient, and dally/Magu inhibits fwe-dependent apoptosis to keep cell death rate low. When the levels of these different proteins are optimally regulated the gradient correctly scales with organ growth but when this fails, fwe-mediated apoptosis is activated to trim the developing tissue to match the correct size of the gradient. This is Calcium channel flower from Drosophila yakuba (Fruit fly).